Consider the following 467-residue polypeptide: ATP synthase subunit beta (467 aa).

An ATP-binding site is contributed by 152-159 (GGAGVGKT).

This sequence belongs to the ATPase alpha/beta chains family. F-type ATPases have 2 components, CF(1) - the catalytic core - and CF(0) - the membrane proton channel. CF(1) has five subunits: alpha(3), beta(3), gamma(1), delta(1), epsilon(1). CF(0) has three main subunits: a(1), b(2) and c(9-12). The alpha and beta chains form an alternating ring which encloses part of the gamma chain. CF(1) is attached to CF(0) by a central stalk formed by the gamma and epsilon chains, while a peripheral stalk is formed by the delta and b chains.

It localises to the cell inner membrane. It carries out the reaction ATP + H2O + 4 H(+)(in) = ADP + phosphate + 5 H(+)(out). Produces ATP from ADP in the presence of a proton gradient across the membrane. The catalytic sites are hosted primarily by the beta subunits. This is ATP synthase subunit beta from Wolinella succinogenes (strain ATCC 29543 / DSM 1740 / CCUG 13145 / JCM 31913 / LMG 7466 / NCTC 11488 / FDC 602W) (Vibrio succinogenes).